We begin with the raw amino-acid sequence, 349 residues long: Ion-translocating oxidoreductase complex subunit D (349 aa).

The next 3 helical transmembrane spans lie at 37-57, 73-90, and 124-144; these read AFFG…ALSA, LSDN…VAIP, and AMAA…TWIA. T185 is modified (FMN phosphoryl threonine). 5 consecutive transmembrane segments (helical) span residues 212–232, 239–259, 265–285, 291–311, and 315–335; these read ATGV…LVLL, WHIS…GFLL, GSPL…FIAT, ATSP…VYII, and GGYP…APFI.

Belongs to the NqrB/RnfD family. In terms of assembly, the complex is composed of six subunits: RnfA, RnfB, RnfC, RnfD, RnfE and RnfG. FMN is required as a cofactor.

Its subcellular location is the cell inner membrane. Functionally, part of a membrane-bound complex that couples electron transfer with translocation of ions across the membrane. The protein is Ion-translocating oxidoreductase complex subunit D of Shewanella sp. (strain W3-18-1).